The sequence spans 1297 residues: Phosphoribosylformylglycinamidine synthase (1297 aa).

Positions 301–329 are disordered; the sequence is TAISPFPGAATGSGGEIRDEGATGRGAKP. 308-319 is an ATP binding site; it reads GAATGSGGEIRD. Aspartate 680, glutamate 719, asparagine 723, and aspartate 887 together coordinate Mg(2+). Serine 889 is a binding site for ATP. The 253-residue stretch at 1045 to 1297 folds into the Glutamine amidotransferase type-1 domain; sequence IAILREQGVN…RLFRNARMVF (253 aa). The active-site Nucleophile is cysteine 1138. Catalysis depends on residues histidine 1263 and glutamate 1265.

It in the N-terminal section; belongs to the FGAMS family. As to quaternary structure, monomer.

The protein resides in the cytoplasm. The enzyme catalyses N(2)-formyl-N(1)-(5-phospho-beta-D-ribosyl)glycinamide + L-glutamine + ATP + H2O = 2-formamido-N(1)-(5-O-phospho-beta-D-ribosyl)acetamidine + L-glutamate + ADP + phosphate + H(+). Its pathway is purine metabolism; IMP biosynthesis via de novo pathway; 5-amino-1-(5-phospho-D-ribosyl)imidazole from N(2)-formyl-N(1)-(5-phospho-D-ribosyl)glycinamide: step 1/2. Phosphoribosylformylglycinamidine synthase involved in the purines biosynthetic pathway. Catalyzes the ATP-dependent conversion of formylglycinamide ribonucleotide (FGAR) and glutamine to yield formylglycinamidine ribonucleotide (FGAM) and glutamate. This chain is Phosphoribosylformylglycinamidine synthase, found in Haemophilus influenzae (strain ATCC 51907 / DSM 11121 / KW20 / Rd).